A 438-amino-acid chain; its full sequence is Adenosylhomocysteinase (438 aa).

Substrate is bound by residues threonine 61, aspartate 137, and glutamate 162. 163-165 contributes to the NAD(+) binding site; sequence TTT. Substrate contacts are provided by lysine 192 and aspartate 196. NAD(+) is bound by residues asparagine 197, 226–231, glutamate 249, asparagine 284, 305–307, and asparagine 352; these read GYGDVG and IGH.

Belongs to the adenosylhomocysteinase family. The cofactor is NAD(+).

The protein resides in the cytoplasm. It carries out the reaction S-adenosyl-L-homocysteine + H2O = L-homocysteine + adenosine. Its pathway is amino-acid biosynthesis; L-homocysteine biosynthesis; L-homocysteine from S-adenosyl-L-homocysteine: step 1/1. Functionally, may play a key role in the regulation of the intracellular concentration of adenosylhomocysteine. This chain is Adenosylhomocysteinase, found in Flavobacterium psychrophilum (strain ATCC 49511 / DSM 21280 / CIP 103535 / JIP02/86).